A 161-amino-acid chain; its full sequence is NADH-quinone oxidoreductase subunit I (161 aa).

4Fe-4S ferredoxin-type domains are found at residues 53–82 (RRYP…IEAE) and 92–121 (TRYD…EGPN). Positions 62, 65, 68, 72, 101, 104, 107, and 111 each coordinate [4Fe-4S] cluster.

It belongs to the complex I 23 kDa subunit family. As to quaternary structure, NDH-1 is composed of 14 different subunits. Subunits NuoA, H, J, K, L, M, N constitute the membrane sector of the complex. [4Fe-4S] cluster serves as cofactor.

It is found in the cell inner membrane. The enzyme catalyses a quinone + NADH + 5 H(+)(in) = a quinol + NAD(+) + 4 H(+)(out). In terms of biological role, NDH-1 shuttles electrons from NADH, via FMN and iron-sulfur (Fe-S) centers, to quinones in the respiratory chain. The immediate electron acceptor for the enzyme in this species is believed to be ubiquinone. Couples the redox reaction to proton translocation (for every two electrons transferred, four hydrogen ions are translocated across the cytoplasmic membrane), and thus conserves the redox energy in a proton gradient. The protein is NADH-quinone oxidoreductase subunit I of Hyphomonas neptunium (strain ATCC 15444).